Reading from the N-terminus, the 347-residue chain is Protein YIPF1 homolog (347 aa).

Residues 1 to 115 (MSNYNNKHHD…FSDNVPLNTN (115 aa)) form a disordered region. Residues 1 to 166 (MSNYNNKHHD…FFNLIRENPD (166 aa)) are Cytoplasmic-facing. Positions 34-47 (NLFPNTNIDYNDYT) are enriched in polar residues. 2 stretches are compositionally biased toward low complexity: residues 48–67 (QNRGQQQQQQPAYQPDLQFQ) and 76–104 (NSNTSPNNNNNNNSNNNNSNKIGGNSSNN). Residues 105–115 (KFSDNVPLNTN) are compositionally biased toward polar residues. The helical transmembrane segment at 167-187 (LYGPFWVLTSLVFIVAVTSNL) threads the bilayer. At 188 to 207 (NEYFHSSDHKSWEVDIQKIV) the chain is on the lumenal side. A helical membrane pass occupies residues 208–228 (YSAITIYGYSFVIPLILWGIF). Residues 229 to 232 (KWMN) lie on the Cytoplasmic side of the membrane. A helical membrane pass occupies residues 233–253 (LGLRLLDMLCIYGYTLFIFVP). The Lumenal segment spans residues 254-255 (AS). Residues 256-276 (ILCVIPLQLVQWIIVAIASIV) traverse the membrane as a helical segment. The Cytoplasmic segment spans residues 277–296 (SGLFLVTNIFTPLKEDFTKR). Residues 297-317 (GLIICAVIGALHIGLALVLKL) form a helical membrane-spanning segment. Residues 318–347 (YFFANSTENFTISDSSSTPTPTPTNTTKLL) lie on the Lumenal side of the membrane. N-linked (GlcNAc...) asparagine glycosylation is found at Asn-322, Asn-326, and Asn-342.

It belongs to the YIP1 family.

It localises to the golgi apparatus. Its subcellular location is the cis-Golgi network membrane. It is found in the trans-Golgi network membrane. The protein resides in the late endosome membrane. The protein is Protein YIPF1 homolog (yipf1) of Dictyostelium discoideum (Social amoeba).